The primary structure comprises 486 residues: Glutamyl-tRNA(Gln) amidotransferase subunit A (486 aa).

Residues Lys-74 and Ser-149 each act as charge relay system in the active site. The active-site Acyl-ester intermediate is Ser-173.

This sequence belongs to the amidase family. GatA subfamily. Heterotrimer of A, B and C subunits.

It carries out the reaction L-glutamyl-tRNA(Gln) + L-glutamine + ATP + H2O = L-glutaminyl-tRNA(Gln) + L-glutamate + ADP + phosphate + H(+). Its function is as follows. Allows the formation of correctly charged Gln-tRNA(Gln) through the transamidation of misacylated Glu-tRNA(Gln) in organisms which lack glutaminyl-tRNA synthetase. The reaction takes place in the presence of glutamine and ATP through an activated gamma-phospho-Glu-tRNA(Gln). The sequence is that of Glutamyl-tRNA(Gln) amidotransferase subunit A from Prochlorococcus marinus (strain MIT 9303).